The chain runs to 176 residues: NAD(P)H-quinone oxidoreductase subunit 6, chloroplastic (176 aa).

A run of 5 helical transmembrane segments spans residues Phe10 to Thr30, Pro32 to Leu52, Leu63 to Ser83, Leu92 to Val112, and Phe152 to Val172.

It belongs to the complex I subunit 6 family. NDH is composed of at least 16 different subunits, 5 of which are encoded in the nucleus.

The protein resides in the plastid. Its subcellular location is the chloroplast thylakoid membrane. It catalyses the reaction a plastoquinone + NADH + (n+1) H(+)(in) = a plastoquinol + NAD(+) + n H(+)(out). The catalysed reaction is a plastoquinone + NADPH + (n+1) H(+)(in) = a plastoquinol + NADP(+) + n H(+)(out). NDH shuttles electrons from NAD(P)H:plastoquinone, via FMN and iron-sulfur (Fe-S) centers, to quinones in the photosynthetic chain and possibly in a chloroplast respiratory chain. The immediate electron acceptor for the enzyme in this species is believed to be plastoquinone. Couples the redox reaction to proton translocation, and thus conserves the redox energy in a proton gradient. This is NAD(P)H-quinone oxidoreductase subunit 6, chloroplastic (ndhG) from Cicer arietinum (Chickpea).